Here is a 488-residue protein sequence, read N- to C-terminus: Palmitoleoyl-protein carboxylesterase notum1 (488 aa).

The N-terminal stretch at 1–20 (MAGALCVTLLLLLSTNTVSG) is a signal peptide. N-linked (GlcNAc...) asparagine glycosylation is present at N90. Active-site charge relay system residues include S226, D334, and H383.

It belongs to the pectinacetylesterase family. Notum subfamily. In terms of tissue distribution, expressed in the egg and through cleavage to gastrulation stages. Enriched in the animal (prospective ectoderm) and dorsal regions in early gastrula. Shows a dynamic expression during embryogenesis, in particular during neural induction and antero-posterior (AP) patterning.

Its subcellular location is the secreted. It carries out the reaction [Wnt protein]-O-(9Z)-hexadecenoyl-L-serine + H2O = [Wnt protein]-L-serine + (9Z)-hexadecenoate + H(+). Functionally, carboxylesterase that acts as a key negative regulator of the Wnt signaling pathway by specifically mediating depalmitoleoylation of WNT proteins. Serine palmitoleoylation of WNT proteins is required for efficient binding to frizzled receptors. Functions in the prospective ectoderm and is required for neural induction. The sequence is that of Palmitoleoyl-protein carboxylesterase notum1 from Xenopus laevis (African clawed frog).